The primary structure comprises 1241 residues: ATP-dependent helicase/nuclease subunit A (1241 aa).

The UvrD-like helicase ATP-binding domain maps to 12-485 (SQWTDDQWKA…IDLAKNFRSR (474 aa)). 33 to 40 (AAAGSGKT) contributes to the ATP binding site. The UvrD-like helicase C-terminal domain maps to 505-805 (GEIDYDADAE…RIMTIHKSKG (301 aa)).

Belongs to the helicase family. AddA subfamily. Heterodimer of AddA and AddB/RexB. It depends on Mg(2+) as a cofactor.

The catalysed reaction is Couples ATP hydrolysis with the unwinding of duplex DNA by translocating in the 3'-5' direction.. It carries out the reaction ATP + H2O = ADP + phosphate + H(+). The heterodimer acts as both an ATP-dependent DNA helicase and an ATP-dependent, dual-direction single-stranded exonuclease. Recognizes the chi site generating a DNA molecule suitable for the initiation of homologous recombination. The AddA nuclease domain is required for chi fragment generation; this subunit has the helicase and 3' -&gt; 5' nuclease activities. The protein is ATP-dependent helicase/nuclease subunit A of Bacillus cereus (strain Q1).